A 37-amino-acid polypeptide reads, in one-letter code: Kappa-actitoxin-Bgr1a (37 aa).

The ShKT domain occupies 2 to 37 (CRDWFKETACRHAKSLGNCRTSQKYRANCAKTCELC). Intrachain disulfides connect C2-C37, C11-C30, and C20-C34. A crucial for binding to potassium channels region spans residues 25–26 (KY).

The protein belongs to the sea anemone type 1 potassium channel toxin family. Type 1b subfamily.

The protein resides in the secreted. It is found in the nematocyst. Functionally, inhibits voltage-dependent potassium channels of the Kv1 family (Kv1.1/KCNA1 (Kd=6 nM), Kv1.2/KCNA2 (Kd=15 nM), Kv1.3/KCNA3 (Kd=10-39 nM), Kv1.6/KCNA6, and KCa3.1/KCNN4 (Kd=172 nM)). The polypeptide is Kappa-actitoxin-Bgr1a (Bunodosoma granuliferum (Red warty sea anemone)).